Reading from the N-terminus, the 369-residue chain is Phosphatidylglycerol--prolipoprotein diacylglyceryl transferase (369 aa).

The next 3 membrane-spanning stretches (helical) occupy residues 26–46 (YYGI…ILTL), 60–80 (YVFI…FIIG), and 97–117 (LAIQ…FFFI). Residue Arg-167 coordinates a 1,2-diacyl-sn-glycero-3-phospho-(1'-sn-glycerol). The next 2 membrane-spanning stretches (helical) occupy residues 216–236 (VPIF…IVFL) and 273–293 (FVTS…GFIF).

This sequence belongs to the Lgt family.

Its subcellular location is the cell membrane. It catalyses the reaction L-cysteinyl-[prolipoprotein] + a 1,2-diacyl-sn-glycero-3-phospho-(1'-sn-glycerol) = an S-1,2-diacyl-sn-glyceryl-L-cysteinyl-[prolipoprotein] + sn-glycerol 1-phosphate + H(+). It participates in protein modification; lipoprotein biosynthesis (diacylglyceryl transfer). In terms of biological role, catalyzes the transfer of the diacylglyceryl group from phosphatidylglycerol to the sulfhydryl group of the N-terminal cysteine of a prolipoprotein, the first step in the formation of mature lipoproteins. The sequence is that of Phosphatidylglycerol--prolipoprotein diacylglyceryl transferase from Mycoplasmoides gallisepticum (strain R(low / passage 15 / clone 2)) (Mycoplasma gallisepticum).